A 1370-amino-acid chain; its full sequence is DNA-directed RNA polymerase subunit beta (1370 aa).

Belongs to the RNA polymerase beta chain family. The RNAP catalytic core consists of 2 alpha, 1 beta, 1 beta' and 1 omega subunit. When a sigma factor is associated with the core the holoenzyme is formed, which can initiate transcription.

The enzyme catalyses RNA(n) + a ribonucleoside 5'-triphosphate = RNA(n+1) + diphosphate. In terms of biological role, DNA-dependent RNA polymerase catalyzes the transcription of DNA into RNA using the four ribonucleoside triphosphates as substrates. This is DNA-directed RNA polymerase subunit beta from Verminephrobacter eiseniae (strain EF01-2).